Reading from the N-terminus, the 185-residue chain is Threonylcarbamoyl-AMP synthase (185 aa).

The YrdC-like domain occupies 7 to 185 (AAQRRAARAH…IDFASGRVLR (179 aa)).

The protein belongs to the SUA5 family. TsaC subfamily.

The protein resides in the cytoplasm. It carries out the reaction L-threonine + hydrogencarbonate + ATP = L-threonylcarbamoyladenylate + diphosphate + H2O. Its function is as follows. Required for the formation of a threonylcarbamoyl group on adenosine at position 37 (t(6)A37) in tRNAs that read codons beginning with adenine. Catalyzes the conversion of L-threonine, HCO(3)(-)/CO(2) and ATP to give threonylcarbamoyl-AMP (TC-AMP) as the acyladenylate intermediate, with the release of diphosphate. This chain is Threonylcarbamoyl-AMP synthase, found in Laribacter hongkongensis (strain HLHK9).